We begin with the raw amino-acid sequence, 102 residues long: Small ribosomal subunit protein uS10 (102 aa).

The protein belongs to the universal ribosomal protein uS10 family. Part of the 30S ribosomal subunit.

Functionally, involved in the binding of tRNA to the ribosomes. The sequence is that of Small ribosomal subunit protein uS10 from Enterococcus faecalis (strain ATCC 700802 / V583).